We begin with the raw amino-acid sequence, 290 residues long: 4-hydroxy-tetrahydrodipicolinate synthase (290 aa).

A pyruvate-binding site is contributed by Thr-48. Residue Tyr-137 is the Proton donor/acceptor of the active site. Residue Lys-165 is the Schiff-base intermediate with substrate of the active site. Residue Ile-206 participates in pyruvate binding.

This sequence belongs to the DapA family. In terms of assembly, homotetramer; dimer of dimers.

Its subcellular location is the cytoplasm. The enzyme catalyses L-aspartate 4-semialdehyde + pyruvate = (2S,4S)-4-hydroxy-2,3,4,5-tetrahydrodipicolinate + H2O + H(+). It functions in the pathway amino-acid biosynthesis; L-lysine biosynthesis via DAP pathway; (S)-tetrahydrodipicolinate from L-aspartate: step 3/4. Its function is as follows. Catalyzes the condensation of (S)-aspartate-beta-semialdehyde [(S)-ASA] and pyruvate to 4-hydroxy-tetrahydrodipicolinate (HTPA). The chain is 4-hydroxy-tetrahydrodipicolinate synthase from Ligilactobacillus salivarius (strain UCC118) (Lactobacillus salivarius).